The following is a 65-amino-acid chain: Large ribosomal subunit protein bL32 (65 aa).

A compositionally biased stretch (basic residues) spans 1-19 (MAVQKSRKTPSKRGMRRSH). Residues 1-32 (MAVQKSRKTPSKRGMRRSHNALTNPTLSEDQE) are disordered.

Belongs to the bacterial ribosomal protein bL32 family.

The protein is Large ribosomal subunit protein bL32 of Ruthia magnifica subsp. Calyptogena magnifica.